Here is a 576-residue protein sequence, read N- to C-terminus: MNYCKISFYFLLSISLSLFLISLKFLLKDLVYFIEWEAWVFKSMSIVMTFLFDWMSLMFMSFVLLISSLVIFYSNQYMEEDYNINRFILLVLMFVMSMMMLIISPNLISILLGWDGLGLVSYCLVIYFQNVKSYNAGMLTALSNRIGDVALLLAIAWMLNYGSWNYIFYLEMMSKNTEMMIIGGLVMLAAMTKSAQIPFSSWLPAAMAAPTPVSALVHSSTLVTAGLYLLIRFNILLTDWWMGQFMLLISGLTMFMAGLGANFEFDLKKIIALSTLSQLGLMMSILSMGFYKLAFFHLLTHALFKALLFMCAGSIIHNMKNSQDIRMMGSLSMSMPLTCSCFNVANLALCGMPFLAGFYSKDLILEMVSLSYVNVFSFFLFFFSTGLTVCYSFRLVYYSMTGDFNSSVLHPLNDSGWTMLFSIFFLMIMAVIGGSMLSWLMFLNPSMICLPFDLKMLTLFVCILGGLIGYLLSNVSLFFTNKALYFYNFTYFAGSMWFMPVVSTIGVINYPLKLGLYSYKSFDQGWSEFFGGQMIYNQLKNYSLYLQEFQMNSLKIYLLSYMLWFIVLLMLVVLVN.

16 consecutive transmembrane segments (helical) span residues 6–26 (ISFYFLLSISLSLFLISLKFL), 46–66 (IVMTFLFDWMSLMFMSFVLLI), 88–108 (ILLVLMFVMSMMMLIISPNLI), 109–129 (SILLGWDGLGLVSYCLVIYFQ), 149–169 (VALLLAIAWMLNYGSWNYIFY), 179–199 (MMIIGGLVMLAAMTKSAQIPF), 211–231 (TPVSALVHSSTLVTAGLYLLI), 240–260 (WWMGQFMLLISGLTMFMAGLG), 270–289 (IIALSTLSQLGLMMSILSMG), 294–316 (AFFHLLTHALFKALLFMCAGSII), 339–359 (CSCFNVANLALCGMPFLAGFY), 363–383 (LILEMVSLSYVNVFSFFLFFF), 423–443 (IFFLMIMAVIGGSMLSWLMFL), 459–479 (LFVCILGGLIGYLLSNVSLFF), 492–512 (FAGSMWFMPVVSTIGVINYPL), and 556–576 (IYLLSYMLWFIVLLMLVVLVN).

It belongs to the complex I subunit 5 family.

It is found in the mitochondrion inner membrane. The enzyme catalyses a ubiquinone + NADH + 5 H(+)(in) = a ubiquinol + NAD(+) + 4 H(+)(out). Its function is as follows. Core subunit of the mitochondrial membrane respiratory chain NADH dehydrogenase (Complex I) that is believed to belong to the minimal assembly required for catalysis. Complex I functions in the transfer of electrons from NADH to the respiratory chain. The immediate electron acceptor for the enzyme is believed to be ubiquinone. The sequence is that of NADH-ubiquinone oxidoreductase chain 5 (ND5) from Anopheles quadrimaculatus (Common malaria mosquito).